The primary structure comprises 318 residues: Transaldolase (318 aa).

Catalysis depends on lysine 132, which acts as the Schiff-base intermediate with substrate.

It belongs to the transaldolase family. Type 1 subfamily. In terms of assembly, homodimer.

It localises to the cytoplasm. It catalyses the reaction D-sedoheptulose 7-phosphate + D-glyceraldehyde 3-phosphate = D-erythrose 4-phosphate + beta-D-fructose 6-phosphate. The protein operates within carbohydrate degradation; pentose phosphate pathway; D-glyceraldehyde 3-phosphate and beta-D-fructose 6-phosphate from D-ribose 5-phosphate and D-xylulose 5-phosphate (non-oxidative stage): step 2/3. Its function is as follows. Transaldolase is important for the balance of metabolites in the pentose-phosphate pathway. The polypeptide is Transaldolase (Shewanella woodyi (strain ATCC 51908 / MS32)).